A 160-amino-acid chain; its full sequence is Fluoride-specific ion channel FluC (160 aa).

Helical transmembrane passes span 5 to 25 (LFIS…GLLF), 34 to 54 (FGTL…LGLF), 67 to 87 (FLIT…SEVV), and 99 to 119 (FCVL…GIWI). The Na(+) site is built by Gly-74 and Thr-77.

Belongs to the fluoride channel Fluc/FEX (TC 1.A.43) family.

Its subcellular location is the cell inner membrane. It carries out the reaction fluoride(in) = fluoride(out). With respect to regulation, na(+) is not transported, but it plays an essential structural role and its presence is essential for fluoride channel function. Fluoride-specific ion channel. Important for reducing fluoride concentration in the cell, thus reducing its toxicity. The sequence is that of Fluoride-specific ion channel FluC from Haemophilus influenzae (strain ATCC 51907 / DSM 11121 / KW20 / Rd).